Here is a 287-residue protein sequence, read N- to C-terminus: Elongation factor Ts (287 aa).

The involved in Mg(2+) ion dislocation from EF-Tu stretch occupies residues 80 to 83 (TDFL).

Belongs to the EF-Ts family.

The protein localises to the cytoplasm. Functionally, associates with the EF-Tu.GDP complex and induces the exchange of GDP to GTP. It remains bound to the aminoacyl-tRNA.EF-Tu.GTP complex up to the GTP hydrolysis stage on the ribosome. The protein is Elongation factor Ts of Ectopseudomonas mendocina (strain ymp) (Pseudomonas mendocina).